We begin with the raw amino-acid sequence, 395 residues long: Phosphoglycerate kinase (395 aa).

Substrate-binding positions include 21 to 23 (DFN), Arg-36, 59 to 62 (HLGR), Arg-120, and Arg-153. Residues Lys-203, Gly-294, Glu-325, and 351-354 (GGDS) each bind ATP.

Belongs to the phosphoglycerate kinase family. In terms of assembly, monomer.

The protein resides in the cytoplasm. The enzyme catalyses (2R)-3-phosphoglycerate + ATP = (2R)-3-phospho-glyceroyl phosphate + ADP. It functions in the pathway carbohydrate degradation; glycolysis; pyruvate from D-glyceraldehyde 3-phosphate: step 2/5. The polypeptide is Phosphoglycerate kinase (Finegoldia magna (strain ATCC 29328 / DSM 20472 / WAL 2508) (Peptostreptococcus magnus)).